We begin with the raw amino-acid sequence, 156 residues long: Enhancer of split M1 protein (156 aa).

A signal peptide spans 1–19 (MMSQTLTLCCLGLVACVYG). Kazal-like domains follow at residues 23–81 (STND…AWCS) and 96–156 (KLEV…EEKC). Intrachain disulfides connect cysteine 29–cysteine 62, cysteine 33–cysteine 55, cysteine 102–cysteine 135, cysteine 106–cysteine 128, and cysteine 114–cysteine 156.

The polypeptide is Enhancer of split M1 protein (Drosophila simulans (Fruit fly)).